Here is a 269-residue protein sequence, read N- to C-terminus: 2-dehydro-3-deoxyphosphooctonate aldolase (269 aa).

This sequence belongs to the KdsA family.

It localises to the cytoplasm. It catalyses the reaction D-arabinose 5-phosphate + phosphoenolpyruvate + H2O = 3-deoxy-alpha-D-manno-2-octulosonate-8-phosphate + phosphate. It participates in carbohydrate biosynthesis; 3-deoxy-D-manno-octulosonate biosynthesis; 3-deoxy-D-manno-octulosonate from D-ribulose 5-phosphate: step 2/3. It functions in the pathway bacterial outer membrane biogenesis; lipopolysaccharide biosynthesis. The sequence is that of 2-dehydro-3-deoxyphosphooctonate aldolase from Chlamydia trachomatis serovar A (strain ATCC VR-571B / DSM 19440 / HAR-13).